A 455-amino-acid polypeptide reads, in one-letter code: Indoleacetamide hydrolase (455 aa).

Residues lysine 71 and serine 146 each act as charge relay system in the active site. Serine 170 functions as the Acyl-ester intermediate in the catalytic mechanism.

The protein belongs to the amidase family.

It participates in plant hormone metabolism; auxin biosynthesis. Its function is as follows. Hydrolyzes indole-3-acetamide (IAM) into indole-3-acetic acid (IAA). The chain is Indoleacetamide hydrolase (iaaH) from Pseudomonas savastanoi (Pseudomonas syringae pv. savastanoi).